The sequence spans 249 residues: Vacuolar iron transporter homolog 3 (249 aa).

The interval 1–32 (MAMQMNSVVHVSTSPSPSPATSPPPEGKQEHG) is disordered. The Cytoplasmic portion of the chain corresponds to 1 to 74 (MAMQMNSVVH…SGRAQWLRAA (74 aa)). The segment covering 16–26 (SPSPATSPPPE) has biased composition (pro residues). The chain crosses the membrane as a helical span at residues 75 to 95 (VLGANDGLVSVASLMIGVGAV). The Vacuolar portion of the chain corresponds to 96–102 (SESGRAM). The chain crosses the membrane as a helical span at residues 103 to 123 (LVSGVAGLVAGACSMAIGEFV). The Cytoplasmic segment spans residues 124–166 (SVYAQYDIEVAAARRRRRQRRRRCDGDGEEEGSGRLPSPFKAA). A helical transmembrane segment spans residues 167–187 (AASALAFTVGALLPLLAGGFV). Residues 188–193 (RPWAPR) are Vacuolar-facing. The chain crosses the membrane as a helical span at residues 194–214 (VAAVCAATSAALAGFGALGAA). At 215 to 226 (LGGASPARSAAR) the chain is on the cytoplasmic side. The helical transmembrane segment at 227–247 (VLLGGWAAMAACYGVLRLFAN) threads the bilayer. At 248-249 (LY) the chain is on the vacuolar side.

This sequence belongs to the CCC1 family.

The protein resides in the vacuole membrane. It catalyses the reaction Fe(2+)(in) = Fe(2+)(out). Functionally, probable vacuolar iron transporter that may be involved in the regulation of iron distribution throughout the plant. This chain is Vacuolar iron transporter homolog 3, found in Oryza sativa subsp. japonica (Rice).